The following is a 1281-amino-acid chain: Tubulin polyglutamylase TTLL5 (1281 aa).

In terms of domain architecture, TTL spans 62 to 407 (RYHLSYKIVR…VCQDPAQRAS (346 aa)). Residues K180, 186–187 (RG), 208–211 (SRYI), and 221–223 (KFD) each bind ATP. R186 provides a ligand contact to a protein. R247 contributes to the L-glutamate binding site. Residue 268–269 (TN) coordinates ATP. L-glutamate-binding residues include Y270, S271, and K293. 3 residues coordinate Mg(2+): D353, E366, and N368. The tract at residues 378-488 (PLDLKIKASM…RGGFIRIFPT (111 aa)) is c-MTBD region. Residue K384 participates in L-glutamate binding. Disordered stretches follow at residues 577–614 (MNVK…LREN), 1072–1114 (SASA…LQTG), and 1199–1281 (SSAT…HTKI). Positions 584-604 (ESEEEEEVALDNEDEEQEASQ) are enriched in acidic residues. 4 stretches are compositionally biased toward polar residues: residues 1086-1113 (SGPT…SLQT), 1199-1212 (SSAT…TTLP), 1240-1263 (ATSQ…SSLN), and 1270-1281 (ITSSTDPAHTKI).

It belongs to the tubulin--tyrosine ligase family. As to quaternary structure, interacts with the transcriptional coactivators NCOA1/SRC-1 and NCOA2/TIF2. Mg(2+) is required as a cofactor. Expressed in the retina, found in the rod and cone photoreceptors (at protein level). Widely expressed with highest levels in heart and skeletal muscle and low levels in other tissues.

Its subcellular location is the cell projection. The protein localises to the cilium. The protein resides in the cytoplasm. It is found in the cytoskeleton. It localises to the cilium basal body. Its subcellular location is the nucleus. The catalysed reaction is L-glutamyl-[protein] + L-glutamate + ATP = gamma-L-glutamyl-L-glutamyl-[protein] + ADP + phosphate + H(+). The enzyme catalyses (L-glutamyl)(n)-gamma-L-glutamyl-L-glutamyl-[protein] + L-glutamate + ATP = (L-glutamyl)(n+1)-gamma-L-glutamyl-L-glutamyl-[protein] + ADP + phosphate + H(+). In terms of biological role, polyglutamylase which modifies tubulin, generating polyglutamate side chains on the gamma-carboxyl group of specific glutamate residues within the C-terminal tail of tubulin. Preferentially mediates ATP-dependent initiation step of the polyglutamylation reaction over the elongation step. Preferentially modifies the alpha-tubulin tail over a beta-tail. Required for CCSAP localization to both polyglutamylated spindle and cilia microtubules. Increases the effects of transcriptional coactivator NCOA2/TIF2 in glucocorticoid receptor-mediated repression and induction and in androgen receptor-mediated induction. The polypeptide is Tubulin polyglutamylase TTLL5 (Homo sapiens (Human)).